The following is a 463-amino-acid chain: Glycogen synthase (463 aa).

Position 15 (lysine 15) interacts with ADP-alpha-D-glucose.

The protein belongs to the glycosyltransferase 1 family. Bacterial/plant glycogen synthase subfamily.

The catalysed reaction is [(1-&gt;4)-alpha-D-glucosyl](n) + ADP-alpha-D-glucose = [(1-&gt;4)-alpha-D-glucosyl](n+1) + ADP + H(+). Its pathway is glycan biosynthesis; glycogen biosynthesis. Synthesizes alpha-1,4-glucan chains using ADP-glucose. The sequence is that of Glycogen synthase from Aquifex aeolicus (strain VF5).